The following is a 599-amino-acid chain: Beta-(1--&gt;2)glucan export ATP-binding/permease protein NdvA (599 aa).

The ABC transmembrane type-1 domain occupies 21–301 (TITMCVASVL…ISAFINQTVT (281 aa)). A run of 5 helical transmembrane segments spans residues 22-42 (ITMCVASVLVALVTLAEPVLF), 55-75 (IFSPLLMWAALGGFNIMAAVF), 156-176 (MRMSLVLIVLGVIYVMIGQLV), 248-268 (MASTFSMVVVLVLGAYFVTKG), and 276-296 (IAFIGFAQLMIGRLDQISAFI). The ABC transporter domain occupies 335-569 (IVFDNVTYEF…GGRFSDLLRA (235 aa)). 368 to 375 (GPTGAGKT) lines the ATP pocket.

Belongs to the ABC transporter superfamily. Beta-(1--&gt;2)glucan exporter (TC 3.A.1.108.1) family. Homodimer.

It is found in the cell inner membrane. It carries out the reaction [(1-&gt;2)-beta-D-glucosyl](n)(in) + ATP + H2O = [(1-&gt;2)-beta-D-glucosyl](n)(out) + ADP + phosphate + H(+). Functionally, involved in beta-(1--&gt;2)glucan export. Transmembrane domains (TMD) form a pore in the inner membrane and the ATP-binding domain (NBD) is responsible for energy generation. The chain is Beta-(1--&gt;2)glucan export ATP-binding/permease protein NdvA from Brucella melitensis biotype 1 (strain ATCC 23456 / CCUG 17765 / NCTC 10094 / 16M).